Here is a 524-residue protein sequence, read N- to C-terminus: Glucose-6-phosphate isomerase (524 aa).

The active-site Proton donor is Glu322. Active-site residues include His351 and Lys453.

This sequence belongs to the GPI family.

The protein localises to the cytoplasm. It catalyses the reaction alpha-D-glucose 6-phosphate = beta-D-fructose 6-phosphate. It participates in carbohydrate biosynthesis; gluconeogenesis. Its pathway is carbohydrate degradation; glycolysis; D-glyceraldehyde 3-phosphate and glycerone phosphate from D-glucose: step 2/4. Functionally, catalyzes the reversible isomerization of glucose-6-phosphate to fructose-6-phosphate. In Prochlorococcus marinus (strain NATL2A), this protein is Glucose-6-phosphate isomerase.